The primary structure comprises 431 residues: MDSSEQLRAEDNQSVVSRMQKNYWRTKQVFIKATGKKEDEHVVASDAELDAKLEVFHSIQETCNELVKIVEKYQLRLNVISEEENELGLFLKFQAERDSTQAGEMMDAAGKALCSSAKQRLALCTPLSRLKQEVATFSQRAISDTLVTINRMERARTEYRGALLWMKDASQELDPDTFKQMEKFRKVQNQVRNSKDSFDKLKKDVCQKVDLLGASRCNMLSHSLTTYQRTLLGFWEKTAQMMTQIQEACAGFHPYDFLALKRLQDTPGNLTADCTEGQTEGSCLTTDLNKVALSEEEEEERFEREPAVARALPRDSLEGDDFEKEFSFLNSLLSPTSSSASEFTQECQPACGSPCTGLTSQEPSVGPGSLTSSSQFLPSQLFDLGLHADGAFNTPNNGNQDMSAWFNLFADLGPLSNPDAIGHSDDELLNA.

The AH domain maps to 44–247 (ASDAELDAKL…TAQMMTQIQE (204 aa)). Disordered stretches follow at residues 295–316 (EEEE…PRDS) and 351–372 (CGSP…SLTS). Residues 301 to 316 (RFEREPAVARALPRDS) show a composition bias toward basic and acidic residues. Over residues 356–372 (TGLTSQEPSVGPGSLTS) the composition is skewed to polar residues.

The polypeptide is Islet cell autoantigen 1-like protein (Ica1l) (Mus musculus (Mouse)).